Consider the following 227-residue polypeptide: Cytochrome c oxidase subunit 2 (227 aa).

Residues 1–14 (MAHPFQTGLQDATS) lie on the Mitochondrial intermembrane side of the membrane. The helical transmembrane segment at 15-45 (PIMEELLHFHDHTLMIVFLISSLVLYIISIM) threads the bilayer. At 46–59 (LTTKLTHTNTMDAQ) the chain is on the mitochondrial matrix side. The helical transmembrane segment at 60–87 (EVETVWTILPAIILIMIALPSLRILYMM) threads the bilayer. Residues 88-227 (DEINNPSLTV…YFEKWSASML (140 aa)) are Mitochondrial intermembrane-facing. His161, Cys196, Glu198, Cys200, His204, and Met207 together coordinate Cu cation. Mg(2+) is bound at residue Glu198. Tyr218 carries the post-translational modification Phosphotyrosine.

This sequence belongs to the cytochrome c oxidase subunit 2 family. In terms of assembly, component of the cytochrome c oxidase (complex IV, CIV), a multisubunit enzyme composed of 14 subunits. The complex is composed of a catalytic core of 3 subunits MT-CO1, MT-CO2 and MT-CO3, encoded in the mitochondrial DNA, and 11 supernumerary subunits COX4I, COX5A, COX5B, COX6A, COX6B, COX6C, COX7A, COX7B, COX7C, COX8 and NDUFA4, which are encoded in the nuclear genome. The complex exists as a monomer or a dimer and forms supercomplexes (SCs) in the inner mitochondrial membrane with NADH-ubiquinone oxidoreductase (complex I, CI) and ubiquinol-cytochrome c oxidoreductase (cytochrome b-c1 complex, complex III, CIII), resulting in different assemblies (supercomplex SCI(1)III(2)IV(1) and megacomplex MCI(2)III(2)IV(2)). Found in a complex with TMEM177, COA6, COX18, COX20, SCO1 and SCO2. Interacts with TMEM177 in a COX20-dependent manner. Interacts with COX20. Interacts with COX16. Cu cation serves as cofactor.

It localises to the mitochondrion inner membrane. It carries out the reaction 4 Fe(II)-[cytochrome c] + O2 + 8 H(+)(in) = 4 Fe(III)-[cytochrome c] + 2 H2O + 4 H(+)(out). Component of the cytochrome c oxidase, the last enzyme in the mitochondrial electron transport chain which drives oxidative phosphorylation. The respiratory chain contains 3 multisubunit complexes succinate dehydrogenase (complex II, CII), ubiquinol-cytochrome c oxidoreductase (cytochrome b-c1 complex, complex III, CIII) and cytochrome c oxidase (complex IV, CIV), that cooperate to transfer electrons derived from NADH and succinate to molecular oxygen, creating an electrochemical gradient over the inner membrane that drives transmembrane transport and the ATP synthase. Cytochrome c oxidase is the component of the respiratory chain that catalyzes the reduction of oxygen to water. Electrons originating from reduced cytochrome c in the intermembrane space (IMS) are transferred via the dinuclear copper A center (CU(A)) of subunit 2 and heme A of subunit 1 to the active site in subunit 1, a binuclear center (BNC) formed by heme A3 and copper B (CU(B)). The BNC reduces molecular oxygen to 2 water molecules using 4 electrons from cytochrome c in the IMS and 4 protons from the mitochondrial matrix. This is Cytochrome c oxidase subunit 2 (MT-CO2) from Ailuropoda melanoleuca (Giant panda).